The primary structure comprises 334 residues: Glyceraldehyde-3-phosphate dehydrogenase 2 (334 aa).

NAD(+)-binding positions include 12–13 (RI), Asp-35, and Arg-79. D-glyceraldehyde 3-phosphate-binding positions include 152–154 (SCT), Thr-183, Arg-198, 211–212 (SG), and Arg-234. Cys-153 acts as the Nucleophile in catalysis. Asn-315 lines the NAD(+) pocket.

The protein belongs to the glyceraldehyde-3-phosphate dehydrogenase family. Homotetramer.

It localises to the cytoplasm. It catalyses the reaction D-glyceraldehyde 3-phosphate + phosphate + NAD(+) = (2R)-3-phospho-glyceroyl phosphate + NADH + H(+). The protein operates within carbohydrate degradation; glycolysis; pyruvate from D-glyceraldehyde 3-phosphate: step 1/5. With respect to regulation, inhibited by pentalenolactone (PL). Catalyzes the oxidative phosphorylation of glyceraldehyde 3-phosphate (G3P) to 1,3-bisphosphoglycerate (BPG) using the cofactor NAD. The first reaction step involves the formation of a hemiacetal intermediate between G3P and a cysteine residue, and this hemiacetal intermediate is then oxidized to a thioester, with concomitant reduction of NAD to NADH. The reduced NADH is then exchanged with the second NAD, and the thioester is attacked by a nucleophilic inorganic phosphate to produce BPG. The chain is Glyceraldehyde-3-phosphate dehydrogenase 2 (gap2) from Streptomyces arenae.